A 488-amino-acid polypeptide reads, in one-letter code: GlcNAc-binding protein A (488 aa).

A signal peptide spans 1–24; the sequence is MIMIITKKTLLPVTLALFSSGVMA. The region spanning 25-202 is the Chitin-binding type-4 domain; the sequence is HGYVSSVEGG…SFYNVIDVMF (178 aa). Residues 439–480 form the Chitin-binding type-3 domain; sequence AGSKVLATDGRIYECKPFPYSGYCIQWSPSATQFEPGVGSDW.

It belongs to the GbpA family.

The protein resides in the secreted. Probably interacts with GlcNAc residues. May promote attachment to both epithelial cell surfaces and chitin. The polypeptide is GlcNAc-binding protein A (Photobacterium profundum (strain SS9)).